The chain runs to 127 residues: MEINSNSSLWHSYNSGYNGNKPHPLSPKGDQVKVSITEDRHYKDVKQPVSPDYVAESFSEAMKNALTSVNDLQVEADELTQKMVFDPNSVDAHQVMIASEKARVALTFTKTIADGVVRAYRELTSLR.

The protein belongs to the FliE family.

It is found in the bacterial flagellum basal body. The chain is Flagellar hook-basal body complex protein FliE from Leptospira interrogans serogroup Icterohaemorrhagiae serovar copenhageni (strain Fiocruz L1-130).